Consider the following 303-residue polypeptide: Pseudouridine-5'-phosphate glycosidase (303 aa).

Catalysis depends on glutamate 23, which acts as the Proton donor. Substrate is bound by residues lysine 85 and valine 105. Position 137 (aspartate 137) interacts with Mn(2+). Serine 139 to aspartate 141 serves as a coordination point for substrate. Catalysis depends on lysine 158, which acts as the Nucleophile.

It belongs to the pseudouridine-5'-phosphate glycosidase family. Homotrimer. The cofactor is Mn(2+).

It carries out the reaction D-ribose 5-phosphate + uracil = psi-UMP + H2O. In terms of biological role, catalyzes the reversible cleavage of pseudouridine 5'-phosphate (PsiMP) to ribose 5-phosphate and uracil. Functions biologically in the cleavage direction, as part of a pseudouridine degradation pathway. In Myxococcus xanthus (strain DK1622), this protein is Pseudouridine-5'-phosphate glycosidase.